We begin with the raw amino-acid sequence, 521 residues long: DEAD-box ATP-dependent RNA helicase 12 (521 aa).

Positions M1–T97 are disordered. The span at T13–G50 shows a compositional bias: gly residues. The span at R51–Q89 shows a compositional bias: low complexity. Positions N147–E175 match the Q motif motif. One can recognise a Helicase ATP-binding domain in the interval I178 to I348. ATP is bound at residue A191–T198. The DEAD box motif lies at D296 to D299. The Helicase C-terminal domain occupies G358 to V518.

This sequence belongs to the DEAD box helicase family. DDX6/DHH1 subfamily.

It localises to the cytoplasm. Its subcellular location is the P-body. It carries out the reaction ATP + H2O = ADP + phosphate + H(+). ATP-dependent RNA helicase involved in mRNA turnover, and more specifically in mRNA decapping. The polypeptide is DEAD-box ATP-dependent RNA helicase 12 (Oryza sativa subsp. japonica (Rice)).